The chain runs to 463 residues: MPGMEYSTVSKIYGPLMIVEGVKGVAYGEVVEIETESGEKRKGQVLEARENLAIVQVFEGTRDLDIKTTRVRFTGETLKVPVSMDMLGRIFNGIGKPIDGGPEIIPEDRRDVHGAPLNPVARAYPRDFIQTGISAIDGMNTLVRGQKLPIFSGSGLPHNMLAAQIARQAKVLGEEEQFAVVFAAMGITYEEANFFKKSFEETGAIERAVLFLNLADDPAIERIITPRMALTVAEYLAFDYDMQVLVILTDMTNYAEALREISAAREEVPGRRGYPGYMYTDLATIYERAGRVRGKKGSITQMPILTMPDDDITHPIPDLTGYITEGQIVLSRELHRKGIYPPIDVLPSLSRLMKDGIGKGRTREDHPQLSQQLYAAYAEGRSLRDLVAVVGEEALSETDRKYLKFADRFEREFVAQRYDEDRSIFETLDLGWELLAELPESELKRVRKEYILKYHPKYRKRGS.

It belongs to the ATPase alpha/beta chains family. In terms of assembly, has multiple subunits with at least A(3), B(3), C, D, E, F, H, I and proteolipid K(x).

Its subcellular location is the cell membrane. Functionally, component of the A-type ATP synthase that produces ATP from ADP in the presence of a proton gradient across the membrane. The B chain is a regulatory subunit. The polypeptide is A-type ATP synthase subunit B (Thermococcus gammatolerans (strain DSM 15229 / JCM 11827 / EJ3)).